The chain runs to 207 residues: Ribosomal RNA small subunit methyltransferase G (207 aa).

Residues glycine 77, phenylalanine 82, 100 to 102, and arginine 141 each bind S-adenosyl-L-methionine; that span reads ERS.

Belongs to the methyltransferase superfamily. RNA methyltransferase RsmG family.

The protein resides in the cytoplasm. Specifically methylates the N7 position of a guanine in 16S rRNA. The sequence is that of Ribosomal RNA small subunit methyltransferase G from Borrelia hermsii (strain HS1 / DAH).